Reading from the N-terminus, the 171-residue chain is AN1-type zinc finger protein 2A (171 aa).

2 consecutive AN1-type zinc fingers follow at residues 4 to 52 (PDLG…KKDV) and 94 to 142 (KVFT…SSAS). The Zn(2+) site is built by cysteine 10, cysteine 15, cysteine 25, cysteine 28, cysteine 33, histidine 36, histidine 42, cysteine 44, cysteine 100, cysteine 105, cysteine 115, cysteine 118, cysteine 123, histidine 126, histidine 132, and cysteine 134. Residues 134 to 171 (CQAGSSSASRGRTSTSRAAEQKPSGVSWLAQRLRRTVK) are disordered. The segment covering 136 to 151 (AGSSSASRGRTSTSRA) has biased composition (low complexity).

The protein resides in the cytoplasm. Its subcellular location is the nucleus. The sequence is that of AN1-type zinc finger protein 2A (Zfand2a) from Mus musculus (Mouse).